The sequence spans 450 residues: Phosphoglucosamine mutase (450 aa).

Ser-97 serves as the catalytic Phosphoserine intermediate. Residues Ser-97, Asp-236, Asp-238, and Asp-240 each contribute to the Mg(2+) site. Ser-97 carries the phosphoserine modification.

It belongs to the phosphohexose mutase family. It depends on Mg(2+) as a cofactor. Activated by phosphorylation.

The catalysed reaction is alpha-D-glucosamine 1-phosphate = D-glucosamine 6-phosphate. In terms of biological role, catalyzes the conversion of glucosamine-6-phosphate to glucosamine-1-phosphate. The polypeptide is Phosphoglucosamine mutase (Prochlorococcus marinus (strain AS9601)).